A 270-amino-acid polypeptide reads, in one-letter code: 3-phenylpropionate-dihydrodiol/cinnamic acid-dihydrodiol dehydrogenase (270 aa).

10 to 34 (FITGGGSGLGLALVERFIEEGAQVA) serves as a coordination point for NAD(+). Position 143 (Ser-143) interacts with substrate. The active-site Proton acceptor is the Tyr-156.

Belongs to the short-chain dehydrogenases/reductases (SDR) family.

The enzyme catalyses 3-(cis-5,6-dihydroxycyclohexa-1,3-dien-1-yl)propanoate + NAD(+) = 3-(2,3-dihydroxyphenyl)propanoate + NADH + H(+). The catalysed reaction is (2E)-3-(cis-5,6-dihydroxycyclohexa-1,3-dien-1-yl)prop-2-enoate + NAD(+) = (2E)-3-(2,3-dihydroxyphenyl)prop-2-enoate + NADH + H(+). It functions in the pathway aromatic compound metabolism; 3-phenylpropanoate degradation. Converts 3-phenylpropionate-dihydrodiol (PP-dihydrodiol) and cinnamic acid-dihydrodiol (CI-dihydrodiol) into 3-(2,3-dihydroxylphenyl)propanoic acid (DHPP) and 2,3-dihydroxicinnamic acid (DHCI), respectively. This is 3-phenylpropionate-dihydrodiol/cinnamic acid-dihydrodiol dehydrogenase from Escherichia coli O8 (strain IAI1).